We begin with the raw amino-acid sequence, 575 residues long: V-type ATP synthase alpha chain (575 aa).

238 to 245 (GPFGAGKT) is an ATP binding site.

This sequence belongs to the ATPase alpha/beta chains family.

The catalysed reaction is ATP + H2O + 4 H(+)(in) = ADP + phosphate + 5 H(+)(out). In terms of biological role, produces ATP from ADP in the presence of a proton gradient across the membrane. The V-type alpha chain is a catalytic subunit. The polypeptide is V-type ATP synthase alpha chain (atpA) (Borreliella burgdorferi (strain ATCC 35210 / DSM 4680 / CIP 102532 / B31) (Borrelia burgdorferi)).